The sequence spans 343 residues: Uroporphyrinogen decarboxylase (343 aa).

Substrate is bound by residues 23 to 27, Asp73, Tyr149, Thr204, and His320; that span reads RQAGR.

The protein belongs to the uroporphyrinogen decarboxylase family. In terms of assembly, homodimer.

It localises to the cytoplasm. The enzyme catalyses uroporphyrinogen III + 4 H(+) = coproporphyrinogen III + 4 CO2. It functions in the pathway porphyrin-containing compound metabolism; protoporphyrin-IX biosynthesis; coproporphyrinogen-III from 5-aminolevulinate: step 4/4. In terms of biological role, catalyzes the decarboxylation of four acetate groups of uroporphyrinogen-III to yield coproporphyrinogen-III. The polypeptide is Uroporphyrinogen decarboxylase (Bradyrhizobium sp. (strain BTAi1 / ATCC BAA-1182)).